A 222-amino-acid chain; its full sequence is UPF0441 protein CKO_04429 (222 aa).

Residues 177–194 show a composition bias toward low complexity; that stretch reads TVPKTAMAPKPATTTTVT. The segment at 177–222 is disordered; it reads TVPKTAMAPKPATTTTVTRGGFGESVAKQSTMQRSATGTSNRSMGG. Over residues 203-222 the composition is skewed to polar residues; that stretch reads AKQSTMQRSATGTSNRSMGG.

It belongs to the UPF0441 family.

The sequence is that of UPF0441 protein CKO_04429 from Citrobacter koseri (strain ATCC BAA-895 / CDC 4225-83 / SGSC4696).